The primary structure comprises 166 residues: Cyclic pyranopterin monophosphate synthase (166 aa).

Substrate contacts are provided by residues 75–77 and 115–116; these read MCH and ME. Residue Asp-130 is part of the active site.

This sequence belongs to the MoaC family. Homohexamer; trimer of dimers.

It catalyses the reaction (8S)-3',8-cyclo-7,8-dihydroguanosine 5'-triphosphate = cyclic pyranopterin phosphate + diphosphate. It participates in cofactor biosynthesis; molybdopterin biosynthesis. Catalyzes the conversion of (8S)-3',8-cyclo-7,8-dihydroguanosine 5'-triphosphate to cyclic pyranopterin monophosphate (cPMP). This Shouchella clausii (strain KSM-K16) (Alkalihalobacillus clausii) protein is Cyclic pyranopterin monophosphate synthase.